The following is a 205-amino-acid chain: Ribosomal RNA small subunit methyltransferase G (205 aa).

Residues glycine 76, leucine 81, 127–128, and arginine 140 contribute to the S-adenosyl-L-methionine site; that span reads IE.

It belongs to the methyltransferase superfamily. RNA methyltransferase RsmG family.

The protein localises to the cytoplasm. It catalyses the reaction guanosine(527) in 16S rRNA + S-adenosyl-L-methionine = N(7)-methylguanosine(527) in 16S rRNA + S-adenosyl-L-homocysteine. Specifically methylates the N7 position of guanine in position 527 of 16S rRNA. The polypeptide is Ribosomal RNA small subunit methyltransferase G (Francisella tularensis subsp. novicida (strain U112)).